Here is a 232-residue protein sequence, read N- to C-terminus: Large ribosomal subunit protein uL3 (232 aa).

The protein belongs to the universal ribosomal protein uL3 family. In terms of assembly, part of the 50S ribosomal subunit. Forms a cluster with proteins L14 and L19.

One of the primary rRNA binding proteins, it binds directly near the 3'-end of the 23S rRNA, where it nucleates assembly of the 50S subunit. This chain is Large ribosomal subunit protein uL3, found in Sorangium cellulosum (strain So ce56) (Polyangium cellulosum (strain So ce56)).